The chain runs to 292 residues: Putative OX-2 membrane glycoprotein homolog (292 aa).

Positions 1 to 18 (MSPLMLRLLPLLCIIISA) are cleaved as a signal peptide. Residues 24–136 (PETSPSLVYE…TFTVDNEKTS (113 aa)) form the Ig-like V-type domain. Cys-42 and Cys-126 are disulfide-bonded. Asn-45, Asn-57, Asn-72, and Asn-195 each carry an N-linked (GlcNAc...) asparagine; by host glycan. In terms of domain architecture, Ig-like C2-type spans 147 to 237 (PIVVLYFRYL…TNQKASALVT (91 aa)). The helical transmembrane segment at 263–283 (VFTWIVPLILILIISVMVLLI) threads the bilayer.

The protein localises to the host membrane. The sequence is that of Putative OX-2 membrane glycoprotein homolog (U85) from Human herpesvirus 6B (strain Z29) (HHV-6 variant B).